Here is a 136-residue protein sequence, read N- to C-terminus: Large ribosomal subunit protein uL16 (136 aa).

The protein belongs to the universal ribosomal protein uL16 family. In terms of assembly, part of the 50S ribosomal subunit.

In terms of biological role, binds 23S rRNA and is also seen to make contacts with the A and possibly P site tRNAs. This chain is Large ribosomal subunit protein uL16, found in Rickettsia canadensis (strain McKiel).